The chain runs to 952 residues: Isoleucine--tRNA ligase (952 aa).

The 'HIGH' region signature appears at 58 to 68 (PYANGDIHIGH). Residue Glu576 coordinates L-isoleucyl-5'-AMP. Residues 617-621 (KMSKS) carry the 'KMSKS' region motif. Lys620 lines the ATP pocket. Zn(2+) is bound by residues Cys915, Cys918, Cys935, and Cys938.

It belongs to the class-I aminoacyl-tRNA synthetase family. IleS type 1 subfamily. In terms of assembly, monomer. The cofactor is Zn(2+).

It is found in the cytoplasm. It carries out the reaction tRNA(Ile) + L-isoleucine + ATP = L-isoleucyl-tRNA(Ile) + AMP + diphosphate. In terms of biological role, catalyzes the attachment of isoleucine to tRNA(Ile). As IleRS can inadvertently accommodate and process structurally similar amino acids such as valine, to avoid such errors it has two additional distinct tRNA(Ile)-dependent editing activities. One activity is designated as 'pretransfer' editing and involves the hydrolysis of activated Val-AMP. The other activity is designated 'posttransfer' editing and involves deacylation of mischarged Val-tRNA(Ile). This is Isoleucine--tRNA ligase from Aliivibrio fischeri (strain ATCC 700601 / ES114) (Vibrio fischeri).